Reading from the N-terminus, the 167-residue chain is Putative NADH-quinone oxidoreductase subunit B 2 (167 aa).

The protein belongs to the complex I 20 kDa subunit family. As to quaternary structure, NDH-1 is composed of 14 different subunits. Subunits NuoB, C, D, E, F, and G constitute the peripheral sector of the complex.

The protein resides in the cell inner membrane. It carries out the reaction a quinone + NADH + 5 H(+)(in) = a quinol + NAD(+) + 4 H(+)(out). Its function is as follows. NDH-1 shuttles electrons from NADH, via FMN and iron-sulfur (Fe-S) centers, to quinones in the respiratory chain. Couples the redox reaction to proton translocation (for every two electrons transferred, four hydrogen ions are translocated across the cytoplasmic membrane), and thus conserves the redox energy in a proton gradient. This chain is Putative NADH-quinone oxidoreductase subunit B 2, found in Burkholderia pseudomallei (strain 1710b).